The sequence spans 105 residues: Phosphoribosyl-ATP pyrophosphatase (105 aa).

This sequence belongs to the PRA-PH family.

Its subcellular location is the cytoplasm. It catalyses the reaction 1-(5-phospho-beta-D-ribosyl)-ATP + H2O = 1-(5-phospho-beta-D-ribosyl)-5'-AMP + diphosphate + H(+). Its pathway is amino-acid biosynthesis; L-histidine biosynthesis; L-histidine from 5-phospho-alpha-D-ribose 1-diphosphate: step 2/9. This Ruthia magnifica subsp. Calyptogena magnifica protein is Phosphoribosyl-ATP pyrophosphatase.